The primary structure comprises 452 residues: Acetyl-CoA decarbonylase/synthase complex subunit delta (452 aa).

This sequence belongs to the CdhD family. Heterodimer of delta and gamma chains. The ACDS complex is made up of alpha, epsilon, beta, gamma and delta chains with a probable stoichiometry of (alpha(2)epsilon(2))(4)-beta(8)-(gamma(1)delta(1))(8).

Functionally, part of a complex that catalyzes the reversible cleavage of acetyl-CoA, allowing autotrophic growth from CO(2). Probably maintains the overall quaternary structure of the ACDS complex. In Archaeoglobus fulgidus (strain ATCC 49558 / DSM 4304 / JCM 9628 / NBRC 100126 / VC-16), this protein is Acetyl-CoA decarbonylase/synthase complex subunit delta.